Here is a 493-residue protein sequence, read N- to C-terminus: Transcript termination protein A18 (493 aa).

One can recognise a Helicase ATP-binding domain in the interval 100 to 256 (MIESKRPLYI…NSIINIAKLS (157 aa)). 113-120 (LACGFGKT) is an ATP binding site. The short motif at 206 to 209 (DESH) is the DESH box element.

Belongs to the helicase family. Poxviruses subfamily. Interacts with G2. Might be part of a transcription complex composed at least of G2, A18, and H5.

It localises to the virion. Its function is as follows. DNA helicase which seems to act as a postreplicative transcription termination factor. Involved in ATP-dependent release of nascent RNA. Forms a stable complex with single-stranded DNA, and to a lesser extent RNA. This Vaccinia virus (strain Tian Tan) (VACV) protein is Transcript termination protein A18.